The sequence spans 96 residues: Putative pterin-4-alpha-carbinolamine dehydratase (96 aa).

This sequence belongs to the pterin-4-alpha-carbinolamine dehydratase family.

It carries out the reaction (4aS,6R)-4a-hydroxy-L-erythro-5,6,7,8-tetrahydrobiopterin = (6R)-L-erythro-6,7-dihydrobiopterin + H2O. This chain is Putative pterin-4-alpha-carbinolamine dehydratase, found in Paraburkholderia phytofirmans (strain DSM 17436 / LMG 22146 / PsJN) (Burkholderia phytofirmans).